The following is a 495-amino-acid chain: Tyrosine 3-monooxygenase (495 aa).

Position 19 is a phosphoserine; by CaMK2 (Ser-19). Ser-31 carries the phosphoserine modification. Phosphoserine; by CaMK2 and PKA is present on Ser-40. Positions 41-53 (LIEDARKEREKAE) are enriched in basic and acidic residues. The segment at 41–65 (LIEDARKEREKAEAASAASSEPGDL) is disordered. Residues His-328, His-333, and Glu-373 each coordinate Fe cation. At Ser-469 the chain carries Phosphoserine.

The protein belongs to the biopterin-dependent aromatic amino acid hydroxylase family. As to quaternary structure, homotetramer. Interacts (when phosphorylated at Ser-19) with YWHAG; one YWHAG dimer bounds to one TH tetramer this interaction may influence the phosphorylation and dephosphorylation of other sites. Requires Fe(2+) as cofactor. Post-translationally, phosphorylated on Ser-19, Ser-31 and Ser-40 by several protein kinases with different site specificities. Phosphorylation at Ser-31 and Ser-40 leads to an increase of TH activity. Phosphorylation at Ser-40 activates the enzyme and also counteracts the feedback inhibition of TH by catecholamines. Phosphorylation of Ser-19 and Ser-31 triggers the proteasomal degradation of TH through the ubiquitin-proteasome pathway. Phosphorylation at Ser-31 facilitates transport of TH from the soma to the nerve terminals via the microtubule network. Phosphorylation at Ser-19 induces the high-affinity binding to the 14-3-3 protein YWHAG; this interaction may influence the phosphorylation and dephosphorylation of other sites. Ser-19 increases the phosphorylation at Ser-40 in a hierarchical manner, leading to increased activity.

The protein localises to the cytoplasm. Its subcellular location is the perinuclear region. The protein resides in the nucleus. It is found in the cell projection. It localises to the axon. The protein localises to the cytoplasmic vesicle. Its subcellular location is the secretory vesicle. The protein resides in the synaptic vesicle. It catalyses the reaction (6R)-L-erythro-5,6,7,8-tetrahydrobiopterin + L-tyrosine + O2 = (4aS,6R)-4a-hydroxy-L-erythro-5,6,7,8-tetrahydrobiopterin + L-dopa. It participates in catecholamine biosynthesis; dopamine biosynthesis; dopamine from L-tyrosine: step 1/2. With respect to regulation, inhibited in feedback fashion by the catecholamine neurotransmitters, especially by dopamine in competition with tetrahydrobiopterin. Phosphorylation of several Ser/Thr residues in the N-terminus regulates the catalytic activity. Ser-31 and Ser-40 are readily phosphorylated to activate the catalytic activity. A Cysteine modification induced by N-ethylmaleimide (NEM), inhibits tyrosine 3-monooxygenase activity through the modification of the Cys-174. Functionally, catalyzes the conversion of L-tyrosine to L-dihydroxyphenylalanine (L-Dopa), the rate-limiting step in the biosynthesis of cathecolamines, dopamine, noradrenaline, and adrenaline. Uses tetrahydrobiopterin and molecular oxygen to convert tyrosine to L-Dopa. In addition to tyrosine, is able to catalyze the hydroxylation of phenylalanine and tryptophan with lower specificity. Positively regulates the regression of retinal hyaloid vessels during postnatal development. This chain is Tyrosine 3-monooxygenase (TH), found in Canis lupus familiaris (Dog).